The primary structure comprises 184 residues: NADH-quinone oxidoreductase subunit B (184 aa).

Positions 37, 38, 103, and 132 each coordinate [4Fe-4S] cluster.

The protein belongs to the complex I 20 kDa subunit family. As to quaternary structure, NDH-1 is composed of 14 different subunits. Subunits NuoB, C, D, E, F, and G constitute the peripheral sector of the complex. The cofactor is [4Fe-4S] cluster.

It localises to the cell membrane. The catalysed reaction is a quinone + NADH + 5 H(+)(in) = a quinol + NAD(+) + 4 H(+)(out). In terms of biological role, NDH-1 shuttles electrons from NADH, via FMN and iron-sulfur (Fe-S) centers, to quinones in the respiratory chain. The immediate electron acceptor for the enzyme in this species is believed to be a menaquinone. Couples the redox reaction to proton translocation (for every two electrons transferred, four hydrogen ions are translocated across the cytoplasmic membrane), and thus conserves the redox energy in a proton gradient. The sequence is that of NADH-quinone oxidoreductase subunit B from Mycolicibacterium vanbaalenii (strain DSM 7251 / JCM 13017 / BCRC 16820 / KCTC 9966 / NRRL B-24157 / PYR-1) (Mycobacterium vanbaalenii).